Reading from the N-terminus, the 680-residue chain is Outer dense fiber protein 2 (680 aa).

The segment at 27 to 46 (LPKPSATSSQKSHKRGMKGD) is disordered. Residues S68 and S69 each carry the phosphoserine modification. Phosphothreonine is present on T87. S90 is modified (phosphoserine; by TSSK4). 2 positions are modified to phosphoserine: S101 and S104. A Phosphothreonine modification is found at T105. Phosphoserine occurs at positions 110 and 124. A Glycyl lysine isopeptide (Lys-Gly) (interchain with G-Cter in SUMO2) cross-link involves residue K133. Residue S134 is modified to Phosphoserine. The stretch at 139–212 (QKGERQMAKR…MSKLVEAEMD (74 aa)) forms a coiled coil. T226 bears the Phosphothreonine mark. S256 bears the Phosphoserine mark. Coiled coils occupy residues 275 to 418 (KEDS…AEQL) and 456 to 630 (EIIV…SDLR). The segment at 387-410 (KQKGDRDKESLKKAIRAQKERAEK) is disordered. S627 carries the post-translational modification Phosphoserine. A disordered region spans residues 632–680 (RETGGDQCPEYRVPTGDCQEGGGNPPVPAAARGENTGMWDPGKAVGERH).

It belongs to the ODF2 family. In terms of assembly, self-associates. Associates with microtubules and forms a fibrillar structure partially linked to the microtubule network. Interacts via its C-terminus with PLK1. Interacts with ODF1. Interacts with MARK4; the interaction is required for localization of ODF2 to centrioles. Interacts with TSSK4. Interacts with AKNA. Interacts with QRICH2. Interacts with CFAP58. Interacts with BBOF1. Interacts with CCDC38. Interacts with CCDC42. Post-translationally, tyrosine phosphorylated. Phosphorylated on Ser-90 by TSSK4.

The protein localises to the cytoplasm. Its subcellular location is the cytoskeleton. It is found in the microtubule organizing center. It localises to the centrosome. The protein resides in the cell projection. The protein localises to the cilium. Its subcellular location is the centriole. It is found in the spindle pole. It localises to the flagellum. In terms of biological role, seems to be a major component of sperm tail outer dense fibers (ODF). ODFs are filamentous structures located on the outside of the axoneme in the midpiece and principal piece of the mammalian sperm tail and may help to maintain the passive elastic structures and elastic recoil of the sperm tail. May have a modulating influence on sperm motility. Functions as a general scaffold protein that is specifically localized at the distal/subdistal appendages of mother centrioles. Component of the centrosome matrix required for the localization of PLK1 and NIN to the centrosomes. Required for the formation and/or maintenance of normal CETN1 assembly. This Pongo abelii (Sumatran orangutan) protein is Outer dense fiber protein 2 (ODF2).